The sequence spans 252 residues: 14-3-3 protein 7 (252 aa).

Belongs to the 14-3-3 family. As to quaternary structure, homodimer.

The protein is 14-3-3 protein 7 (TFT7) of Solanum lycopersicum (Tomato).